Consider the following 510-residue polypeptide: ETS translocation variant 5 (510 aa).

The disordered stretch occupies residues 132–245 (KPLTPPATPL…PGDSRPSYHR (114 aa)). Residues 163–174 (TPGAGPVQGVGP) are compositionally biased toward low complexity. Over residues 211–224 (QYPSEQRFQRQLSE) the composition is skewed to polar residues. The residue at position 248 (S248) is a Phosphoserine. Residue K350 forms a Glycyl lysine isopeptide (Lys-Gly) (interchain with G-Cter in SUMO2) linkage. A DNA-binding region (ETS) is located at residues 368 to 448 (LQLWQFLVTL…AGERYVYKFV (81 aa)).

It belongs to the ETS family. In terms of assembly, interacts (via C-terminal) with ZMYM5 (via N-terminal 120 amino acid region). In the brain, expressed predominantly in the cerebral cortex, the amygdala and the hypothalamus. Within the cerebral cortex, there is conspicuously high expression in cortical layers 2, 4 and 6 while expression is almost absent from layers 1, 3 and 5. High expression is also observed in the dorsal and ventral endopiriform claustrum. Strong expression is observed in limited parts of the amygdala including the basolateral amygdaloid nucleus, the bed stria terminalis and the central amygdaloid nucleus. Low to moderate levels are found in the hypothalamus while expression is almost absent in the thalamus. Hypothalamic expression is seen in the dorsomedial hypothalamic nucleus and also the central, dorsomedial and ventrolateral parts of the ventromedial hypothalamic nucleus. Strong expression is also identified in the nigrostriatal tract. In the mesencephalon, expression is restricted to the ventral tegmental area including the parabrachial pigmented nucleus. In the hippocampus, strongly expressed in the pyramidal cell layer. Some expression is also found in the lacunosum moleculare layer. Low levels of expression in the cerebellum, including the granular, molecular and Purkinje cell layers.

It is found in the nucleus. Binds to DNA sequences containing the consensus nucleotide core sequence 5'-GGAA.-3'. The chain is ETS translocation variant 5 (Etv5) from Mus musculus (Mouse).